The primary structure comprises 121 residues: Small ribosomal subunit protein uS13 (121 aa).

The segment at 90-121 (RHRRGLPTRGQNTKNNARTRKGPTKTVAGKKK) is disordered. Residues 106-121 (ARTRKGPTKTVAGKKK) show a composition bias toward basic residues.

It belongs to the universal ribosomal protein uS13 family. As to quaternary structure, part of the 30S ribosomal subunit. Forms a loose heterodimer with protein S19. Forms two bridges to the 50S subunit in the 70S ribosome.

Its function is as follows. Located at the top of the head of the 30S subunit, it contacts several helices of the 16S rRNA. In the 70S ribosome it contacts the 23S rRNA (bridge B1a) and protein L5 of the 50S subunit (bridge B1b), connecting the 2 subunits; these bridges are implicated in subunit movement. Contacts the tRNAs in the A and P-sites. The chain is Small ribosomal subunit protein uS13 from Enterococcus faecalis (strain ATCC 700802 / V583).